A 129-amino-acid polypeptide reads, in one-letter code: Putative zinc finger protein 702 (129 aa).

3 consecutive C2H2-type zinc fingers follow at residues 34–56 (YKCD…HRCH), 62–84 (YKCN…KAIH), and 90–112 (HKCN…HRLH).

It belongs to the krueppel C2H2-type zinc-finger protein family.

It is found in the nucleus. Functionally, may be involved in transcriptional regulation. The chain is Putative zinc finger protein 702 (ZNF702P) from Homo sapiens (Human).